The chain runs to 270 residues: 3-methyl-2-oxobutanoate hydroxymethyltransferase (270 aa).

Mg(2+) is bound by residues aspartate 50 and aspartate 89. Residues 50–51 (DS), aspartate 89, and lysine 118 each bind 3-methyl-2-oxobutanoate. Mg(2+) is bound at residue glutamate 120. The active-site Proton acceptor is glutamate 187.

The protein belongs to the PanB family. As to quaternary structure, homodecamer; pentamer of dimers. Mg(2+) is required as a cofactor.

The protein localises to the cytoplasm. It carries out the reaction 3-methyl-2-oxobutanoate + (6R)-5,10-methylene-5,6,7,8-tetrahydrofolate + H2O = 2-dehydropantoate + (6S)-5,6,7,8-tetrahydrofolate. It participates in cofactor biosynthesis; (R)-pantothenate biosynthesis; (R)-pantoate from 3-methyl-2-oxobutanoate: step 1/2. Catalyzes the reversible reaction in which hydroxymethyl group from 5,10-methylenetetrahydrofolate is transferred onto alpha-ketoisovalerate to form ketopantoate. This is 3-methyl-2-oxobutanoate hydroxymethyltransferase from Helicobacter pylori (strain P12).